A 318-amino-acid chain; its full sequence is NADH-ubiquinone oxidoreductase chain 1 (318 aa).

The next 8 membrane-spanning stretches (helical) occupy residues 2-22, 70-90, 100-120, 147-167, 171-191, 217-237, 254-276, and 294-314; these read FMIN…FLTL, MFII…IPLP, LGIL…LWSG, AIIL…TLII, YLWL…STLA, AGPF…MNIF, LYSI…IRAS, and LPLT…LSSI.

This sequence belongs to the complex I subunit 1 family. Core subunit of respiratory chain NADH dehydrogenase (Complex I) which is composed of 45 different subunits.

Its subcellular location is the mitochondrion inner membrane. The enzyme catalyses a ubiquinone + NADH + 5 H(+)(in) = a ubiquinol + NAD(+) + 4 H(+)(out). Core subunit of the mitochondrial membrane respiratory chain NADH dehydrogenase (Complex I) which catalyzes electron transfer from NADH through the respiratory chain, using ubiquinone as an electron acceptor. Essential for the catalytic activity and assembly of complex I. In Equus asinus (Donkey), this protein is NADH-ubiquinone oxidoreductase chain 1 (MT-ND1).